A 394-amino-acid chain; its full sequence is MNVKKLADLDVAGKRVFIRADLNVPQDEAGNIVEDTRIRASLPSIRYCLERSATVMVTSHLGRPTEGECRAEDTLAPIAVRLGELLGKPVRLIRDWVEGGFEVRAGEVVLLENCRCNKGEKKDNEELAKKMAALCDIYVNDAFGTAHRAEATTHGIARFAPVACAGMLMGAEIDALTKATENPARPLVAIVGGAKVSTKLTILKTLAEKVDQLIVGGGIANTFLLASGKRIGESLAEPELVKEAQAIMDMMKARGAEVPLPVDVVVADEVSALARANRIPVDEVGPHDRILDVGPKSSAKLAEIIAHAGTIVWNGPVGVFEHNQFAGGTKMMASAIAHSEAFCIAGGGDTLAAIAKFHIAQDIGYISTGGGAFLEFLEGKKLPAIAALEARFAD.

Residues 21-23 (DLN), R37, 60-63 (HLGR), R115, and R148 each bind substrate. ATP-binding positions include K199, E321, and 347–350 (GGDT).

This sequence belongs to the phosphoglycerate kinase family. As to quaternary structure, monomer.

The protein resides in the cytoplasm. The catalysed reaction is (2R)-3-phosphoglycerate + ATP = (2R)-3-phospho-glyceroyl phosphate + ADP. Its pathway is carbohydrate degradation; glycolysis; pyruvate from D-glyceraldehyde 3-phosphate: step 2/5. This is Phosphoglycerate kinase from Aromatoleum aromaticum (strain DSM 19018 / LMG 30748 / EbN1) (Azoarcus sp. (strain EbN1)).